Here is a 492-residue protein sequence, read N- to C-terminus: Cholesteryl ester transfer protein (492 aa).

The first 17 residues, 1-17 (MLAVTLLSLALLGSTCA), serve as a signal peptide directing secretion. A disulfide bond links cysteine 160 and cysteine 201. N-linked (GlcNAc...) asparagine glycosylation is present at asparagine 257.

Belongs to the BPI/LBP/Plunc superfamily. BPI/LBP family.

The protein localises to the secreted. The catalysed reaction is cholesteryl (9Z-octadecenoate)(in) = cholesteryl (9Z-octadecenoate)(out). It catalyses the reaction 1,2,3-tri-(9Z-octadecenoyl)-glycerol(in) = 1,2,3-tri-(9Z-octadecenoyl)-glycerol(out). It carries out the reaction cholesteryl (9Z,12Z)-octadecadienoate(in) = cholesteryl (9Z,12Z)-octadecadienoate(out). In terms of biological role, involved in the transfer of neutral lipids, including cholesteryl ester and triglyceride, among lipoprotein particles. Allows the net movement of cholesteryl ester from high density lipoproteins/HDL to triglyceride-rich very low density lipoproteins/VLDL, and the equimolar transport of triglyceride from VLDL to HDL. Regulates the reverse cholesterol transport, by which excess cholesterol is removed from peripheral tissues and returned to the liver for elimination. This Cricetulus griseus (Chinese hamster) protein is Cholesteryl ester transfer protein.